Here is a 139-residue protein sequence, read N- to C-terminus: Probable disulfide formation protein C 1 (139 aa).

Residues E8–Y27 form a helical membrane-spanning segment. Residues C37 and C40 are joined by a disulfide bond. A run of 2 helical transmembrane segments spans residues Y42 to K61 and Y68 to V85. C99 and C104 are disulfide-bonded. Residues G113–V135 traverse the membrane as a helical segment.

This sequence belongs to the DsbB family. BdbC subfamily.

It is found in the cell membrane. Its function is as follows. Required for disulfide bond formation in some proteins. The chain is Probable disulfide formation protein C 1 (bdbC1) from Bacillus anthracis.